The chain runs to 60 residues: Single-pass membrane and coiled-coil domain-containing protein 4 homolog (60 aa).

The disordered stretch occupies residues 1-23 (MRKLRGGQTKETRKQRQERKEEN). The span at 8-23 (QTKETRKQRQERKEEN) shows a compositional bias: basic and acidic residues. Positions 8–33 (QTKETRKQRQERKEENLKIQQQMKTI) form a coiled coil. Residues 31 to 51 (KTIVLPTIGVIFLCIVVYVFL) traverse the membrane as a helical segment.

The protein belongs to the SMCO4 family.

Its subcellular location is the membrane. This is Single-pass membrane and coiled-coil domain-containing protein 4 homolog from Anopheles gambiae (African malaria mosquito).